The following is a 146-amino-acid chain: MHHEVMSGLHVNSLRKHEILRKEQLIAALFVSGKSCKGEYLKLFYQKTVSDVKSRSPAVQVLFAVSKKNVPHAVSRNRLKRLMREAYRNEKQQLFTLCDEGRPEMSGIHLQIAVLYIGGRKSFPSFELLRQEISRLMHNIRLSELT.

This sequence belongs to the RnpA family. As to quaternary structure, consists of a catalytic RNA component (M1 or rnpB) and a protein subunit.

It catalyses the reaction Endonucleolytic cleavage of RNA, removing 5'-extranucleotides from tRNA precursor.. Functionally, RNaseP catalyzes the removal of the 5'-leader sequence from pre-tRNA to produce the mature 5'-terminus. It can also cleave other RNA substrates such as 4.5S RNA. The protein component plays an auxiliary but essential role in vivo by binding to the 5'-leader sequence and broadening the substrate specificity of the ribozyme. The sequence is that of Ribonuclease P protein component from Chlorobium phaeobacteroides (strain DSM 266 / SMG 266 / 2430).